The following is a 106-amino-acid chain: uncharacterized protein (106 aa).

2 consecutive transmembrane segments (helical) span residues 25 to 45 and 62 to 82; these read VMNV…IHYI and ICFL…NFQG.

It localises to the membrane. This is an uncharacterized protein from Saccharomyces cerevisiae (strain ATCC 204508 / S288c) (Baker's yeast).